Reading from the N-terminus, the 490-residue chain is Katanin p60 ATPase-containing subunit A-like 1 (490 aa).

An N-acetylmethionine modification is found at M1. Positions S87–D182 are disordered. Residues S116–M127 show a composition bias toward basic and acidic residues. Positions A128–A139 are enriched in low complexity. The segment covering S143–M169 has biased composition (basic and acidic residues). Residue S174 is modified to Phosphoserine. G248–T255 is a binding site for ATP.

It belongs to the AAA ATPase family. Katanin p60 subunit A1 subfamily. A-like 1 sub-subfamily. In terms of assembly, interacts with KATNB1 and KATNBL1.

The protein resides in the cytoplasm. It is found in the cytoskeleton. The protein localises to the spindle pole. Its subcellular location is the spindle. It carries out the reaction n ATP + n H2O + a microtubule = n ADP + n phosphate + (n+1) alpha/beta tubulin heterodimers.. Functionally, regulates microtubule dynamics in Sertoli cells, a process that is essential for spermiogenesis and male fertility. Severs microtubules in an ATP-dependent manner, promoting rapid reorganization of cellular microtubule arrays. Has microtubule-severing activity in vitro. This Otolemur garnettii (Small-eared galago) protein is Katanin p60 ATPase-containing subunit A-like 1.